A 650-amino-acid polypeptide reads, in one-letter code: Acetyl-coenzyme A synthetase (650 aa).

Residues 190–193, T308, and N332 each bind CoA; that span reads RGGR. ATP is bound by residues 384-386, 408-413, D497, and R512; these read GEP and DTWWQT. S520 lines the CoA pocket. An ATP-binding site is contributed by R523. Residues V534, H536, and V539 each contribute to the Mg(2+) site. Position 581 (R581) interacts with CoA. K606 is modified (N6-acetyllysine).

This sequence belongs to the ATP-dependent AMP-binding enzyme family. Requires Mg(2+) as cofactor. Post-translationally, acetylated. Deacetylation by the SIR2-homolog deacetylase activates the enzyme.

The catalysed reaction is acetate + ATP + CoA = acetyl-CoA + AMP + diphosphate. Functionally, catalyzes the conversion of acetate into acetyl-CoA (AcCoA), an essential intermediate at the junction of anabolic and catabolic pathways. AcsA undergoes a two-step reaction. In the first half reaction, AcsA combines acetate with ATP to form acetyl-adenylate (AcAMP) intermediate. In the second half reaction, it can then transfer the acetyl group from AcAMP to the sulfhydryl group of CoA, forming the product AcCoA. This chain is Acetyl-coenzyme A synthetase, found in Bradyrhizobium sp. (strain ORS 278).